The sequence spans 320 residues: MNKKIGITLGDPAGIGPELILKISKHFKEKFTYVIYGEEKTLLEASKLTGIKLNYKKIEKVEEAKERGVYLIDLNVLKVPVVEPSVSSGKAAVAYLARAVADAIRGNIHGILTMPINKFWAKKAGFQYEGQTEFLAKASGTKDYAMMMYSEKLKVVLLTTHIPLKDVPNYVKKEEILKKVRLIRKEFLEKFKFEPLIKVLGLNPHAGEMGELGREEIEEIIPAVEEAKKEGIKVVGPLVPDVAFINPSEEDVFLCMYHDQGLIPFKMLAFDEGVNFTLGLPFIRTSPDHGTAYDIAWKNKARESSSLHALRLIEDLLDKI.

Threonine 132 is a binding site for substrate. Residues histidine 161, histidine 205, and histidine 258 each contribute to the a divalent metal cation site. Positions 266, 275, and 284 each coordinate substrate.

It belongs to the PdxA family. As to quaternary structure, homodimer. It depends on a divalent metal cation as a cofactor.

It is found in the cytoplasm. It carries out the reaction 4-(phosphooxy)-L-threonine + NAD(+) = 3-amino-2-oxopropyl phosphate + CO2 + NADH. It participates in cofactor biosynthesis; pyridoxine 5'-phosphate biosynthesis; pyridoxine 5'-phosphate from D-erythrose 4-phosphate: step 4/5. Its function is as follows. Catalyzes the NAD(P)-dependent oxidation of 4-(phosphooxy)-L-threonine (HTP) into 2-amino-3-oxo-4-(phosphooxy)butyric acid which spontaneously decarboxylates to form 3-amino-2-oxopropyl phosphate (AHAP). In Aquifex aeolicus (strain VF5), this protein is 4-hydroxythreonine-4-phosphate dehydrogenase.